The sequence spans 549 residues: Alanine aminotransferase 2-like (549 aa).

Lys-367 carries the post-translational modification N6-(pyridoxal phosphate)lysine.

The protein belongs to the class-I pyridoxal-phosphate-dependent aminotransferase family. Alanine aminotransferase subfamily. As to quaternary structure, homodimer. Pyridoxal 5'-phosphate is required as a cofactor.

It carries out the reaction L-alanine + 2-oxoglutarate = pyruvate + L-glutamate. It participates in amino-acid degradation; L-alanine degradation via transaminase pathway; pyruvate from L-alanine: step 1/1. Catalyzes the reversible transamination between alanine and 2-oxoglutarate to form pyruvate and glutamate. The protein is Alanine aminotransferase 2-like (gpt2l) of Danio rerio (Zebrafish).